A 216-amino-acid chain; its full sequence is 3-isopropylmalate dehydratase small subunit (216 aa).

This sequence belongs to the LeuD family. LeuD type 1 subfamily. Heterodimer of LeuC and LeuD.

It catalyses the reaction (2R,3S)-3-isopropylmalate = (2S)-2-isopropylmalate. It participates in amino-acid biosynthesis; L-leucine biosynthesis; L-leucine from 3-methyl-2-oxobutanoate: step 2/4. Its function is as follows. Catalyzes the isomerization between 2-isopropylmalate and 3-isopropylmalate, via the formation of 2-isopropylmaleate. The polypeptide is 3-isopropylmalate dehydratase small subunit (Burkholderia ambifaria (strain MC40-6)).